The following is a 173-amino-acid chain: UPF0316 protein Amet_0954 (173 aa).

3 consecutive transmembrane segments (helical) span residues leucine 3 to valine 23, alanine 38 to leucine 58, and proline 61 to isoleucine 81.

The protein belongs to the UPF0316 family.

It localises to the cell membrane. The sequence is that of UPF0316 protein Amet_0954 from Alkaliphilus metalliredigens (strain QYMF).